Reading from the N-terminus, the 641-residue chain is MYNEQVNSGKSIKEKERYLDALLKILKDNPVTLKEIGWDLPKGLLQFFSRKNINVNIHLVFSPLVSSVMECFNELAINGNPKECLLTACELVSTLHIVLTETGDSDEENEDLNDSNRNDASNITDELSVITPEIGHYMAKNTVEFIPNLKIYVLFEFMSLLLKRVDTLYPSKFLAMVTSAIIKYVTTNVQAMDDPHFILRIVYNFCTNYSPAQPSASLTDGISTNDLEKIHDDESALQKKLLANLSVFVISNCLKNHPGNIDKIYFKTLMHKKTDENEIDASVLQICHQYYEYVTSLDVHMKELLEKCLVESRSIYNSLLMNPAASTPEFKEEINQLVYEVSYAYQIKKLADEKNLELDQYGVVILSAIHYSKNGTHLLPQIDIQSAIYLYLRCTTASLFSEIYENKFLESSVRYWLWVSTTETSTEKIKCALQELPGHITTAFLQMLLMKTCNESNNDTKLTEITLLRRLLYLMPESTSFTFIFETLLHCPYITAKIAVLDILRDMMIRSPEAANRDETVGLIEQQNPGNTANSVPIMPTLPPRPYITINEDRMASIHSIALICFSAAKQKKRTQGDLLLVLTYMKFFVSLRNKWDLGLLTLINKEISESFQGEGEPELAFINISNNTLGEYIEEMNIRS.

The protein belongs to the YBP1 family.

It is found in the cytoplasm. In terms of biological role, involved in oxidative stress response and redox homeostasis. Required for hydrogen peroxide-induced activation of YAP1. Acts in a parallele pathway to YBP1. The polypeptide is YAP1-binding protein 2 (Saccharomyces cerevisiae (strain ATCC 204508 / S288c) (Baker's yeast)).